A 258-amino-acid polypeptide reads, in one-letter code: Chymotrypsin-like elastase family member 1 (258 aa).

An N-terminal signal peptide occupies residues 1–8 (MLVLYGHS). The propeptide at 9 to 18 (TQDVPETNAR) is activation peptide. The Peptidase S1 domain maps to 19–256 (VVGGTEARRN…YITWINNVIA (238 aa)). Residues cysteine 48 and cysteine 64 are joined by a disulfide bond. The active-site Charge relay system is the histidine 63. Residues glutamate 77, asparagine 79, glutamine 82, and glutamate 87 each contribute to the Ca(2+) site. A glycan (N-linked (GlcNAc...) asparagine) is linked at asparagine 79. Aspartate 111 (charge relay system) is an active-site residue. 3 disulfides stabilise this stretch: cysteine 145–cysteine 212, cysteine 176–cysteine 192, and cysteine 202–cysteine 232. Serine 206 functions as the Charge relay system in the catalytic mechanism. Asparagine 233 carries an N-linked (GlcNAc...) asparagine glycan.

Belongs to the peptidase S1 family. Elastase subfamily. Ca(2+) is required as a cofactor.

It is found in the secreted. The catalysed reaction is Hydrolysis of proteins, including elastin. Preferential cleavage: Ala-|-Xaa.. In terms of biological role, serine proteases that hydrolyze many proteins in addition to elastin. This is Chymotrypsin-like elastase family member 1 (CELA1) from Canis lupus familiaris (Dog).